Consider the following 234-residue polypeptide: Lipoprotein-releasing system ATP-binding protein LolD (234 aa).

The 227-residue stretch at leucine 7–alanine 233 folds into the ABC transporter domain. Glycine 43–serine 50 provides a ligand contact to ATP.

Belongs to the ABC transporter superfamily. Lipoprotein translocase (TC 3.A.1.125) family. The complex is composed of two ATP-binding proteins (LolD) and two transmembrane proteins (LolC and LolE).

The protein localises to the cell inner membrane. In terms of biological role, part of the ABC transporter complex LolCDE involved in the translocation of mature outer membrane-directed lipoproteins, from the inner membrane to the periplasmic chaperone, LolA. Responsible for the formation of the LolA-lipoprotein complex in an ATP-dependent manner. The sequence is that of Lipoprotein-releasing system ATP-binding protein LolD from Yersinia pestis bv. Antiqua (strain Antiqua).